Consider the following 406-residue polypeptide: GTPase Obg (406 aa).

One can recognise an Obg domain in the interval 1-159 (MKFVDEVSIH…RDLKLELKVL (159 aa)). The tract at residues 127–148 (NTRFKSSTNRAPRQTTPGKPGE) is disordered. Residues 129–143 (RFKSSTNRAPRQTTP) show a composition bias toward polar residues. Residues 160–334 (ADVGLLGLPN…LSQDIMRYLD (175 aa)) form the OBG-type G domain. GTP is bound by residues 166–173 (GLPNAGKS), 191–195 (FTTLV), 213–216 (DIPG), 283–286 (NKMD), and 315–317 (SAL). Residues Ser-173 and Thr-193 each coordinate Mg(2+). The segment at 382–406 (AGAVDDDDFDDEEDDGDGPEIFYVP) is disordered. Acidic residues predominate over residues 385 to 399 (VDDDDFDDEEDDGDG).

It belongs to the TRAFAC class OBG-HflX-like GTPase superfamily. OBG GTPase family. In terms of assembly, monomer. Mg(2+) serves as cofactor.

It localises to the cytoplasm. Its function is as follows. An essential GTPase which binds GTP, GDP and possibly (p)ppGpp with moderate affinity, with high nucleotide exchange rates and a fairly low GTP hydrolysis rate. Plays a role in control of the cell cycle, stress response, ribosome biogenesis and in those bacteria that undergo differentiation, in morphogenesis control. This Pseudomonas aeruginosa (strain LESB58) protein is GTPase Obg.